The chain runs to 419 residues: BTB/POZ domain-containing protein KCTD20 (419 aa).

In terms of domain architecture, BTB spans 117–191 (EKVTLLVDGT…YKTGIINCPD (75 aa)).

Interacts with AKT1; AKT2 and AKT3. Interacts with PPP2CA and PPP1CA. Part of a complex containing MARK4. In terms of tissue distribution, ubiquitously expressed.

It is found in the cytoplasm. In terms of biological role, promotes the phosphorylation of AKT family members. The sequence is that of BTB/POZ domain-containing protein KCTD20 (Kctd20) from Mus musculus (Mouse).